A 467-amino-acid chain; its full sequence is Probable apyrase 2 (467 aa).

Residues 1–25 lie on the Cytoplasmic side of the membrane; that stretch reads MRRYSALPGGGARPDTLADRLHRYR. Residues 26-46 form a helical; Signal-anchor for type II membrane protein membrane-spanning segment; it reads GVLLVILAPLALVSLVLLLMP. Residues 47-467 lie on the Extracellular side of the membrane; that stretch reads RSPASSSAAA…PLGSAIEVAS (421 aa). 70–80 contributes to the ATP binding site; it reads VIFDAGSSGSR. Residue Glu-192 is the Proton acceptor of the active site. 216-226 contacts ATP; that stretch reads GVVDLGGGSVQ.

It belongs to the GDA1/CD39 NTPase family. It depends on Ca(2+) as a cofactor.

Its subcellular location is the membrane. The catalysed reaction is a ribonucleoside 5'-triphosphate + 2 H2O = a ribonucleoside 5'-phosphate + 2 phosphate + 2 H(+). Catalyzes the hydrolysis of phosphoanhydride bonds of nucleoside tri- and di-phosphates. The protein is Probable apyrase 2 (APY2) of Oryza sativa subsp. japonica (Rice).